The following is a 207-amino-acid chain: Ubiquinol-cytochrome c reductase iron-sulfur subunit (207 aa).

A helical transmembrane segment spans residues 24-44; sequence LVAATSVVGAVGAGYALVPFV. The 100-residue stretch at 100–199 folds into the Rieske domain; it reads PKLVDPTSEV…HVYLNDTTIL (100 aa). [2Fe-2S] cluster is bound by residues C134, H136, C162, and H165. An intrachain disulfide couples C139 to C164.

The main subunits of complex b-c1 are: cytochrome b, cytochrome c1 and the Rieske protein. Requires [2Fe-2S] cluster as cofactor.

The protein localises to the cell membrane. The catalysed reaction is a quinol + 2 Fe(III)-[cytochrome c](out) = a quinone + 2 Fe(II)-[cytochrome c](out) + 2 H(+)(out). Its function is as follows. Component of the ubiquinol-cytochrome c reductase complex (complex III or cytochrome b-c1 complex), which is a respiratory chain that generates an electrochemical potential coupled to ATP synthesis. This chain is Ubiquinol-cytochrome c reductase iron-sulfur subunit (petA), found in Allochromatium vinosum (strain ATCC 17899 / DSM 180 / NBRC 103801 / NCIMB 10441 / D) (Chromatium vinosum).